Here is a 236-residue protein sequence, read N- to C-terminus: MAKYKRVLLKLSGESLMGEKQYGIDEKRLAEYAAQIKEIHEQGVQIGIVIGGGNIFRGLSGANKGFDRVKGDQMGMLATVINSLALSSALVAAGVKARVLTAVRMEPIGEFYSKWKAIECMENGEIVIMSAGTGNPFFTTDTGSSLRGIEIEADVMLKGTRVDGIYTADPEKDPTATKFHDITYDEVLKRGLKVMDLTATCMCKENNLPIVVFDMDTVGNLKKVITGEEIGTLVHN.

Residue 10–13 coordinates ATP; that stretch reads KLSG. Gly52 contributes to the UMP binding site. Residues Gly53 and Arg57 each contribute to the ATP site. UMP-binding positions include Asp72 and 133–140; that span reads TGNPFFTT. Residues Thr160, Tyr166, and Asp169 each contribute to the ATP site.

The protein belongs to the UMP kinase family. As to quaternary structure, homohexamer.

Its subcellular location is the cytoplasm. It catalyses the reaction UMP + ATP = UDP + ADP. It functions in the pathway pyrimidine metabolism; CTP biosynthesis via de novo pathway; UDP from UMP (UMPK route): step 1/1. Its activity is regulated as follows. Inhibited by UTP. Catalyzes the reversible phosphorylation of UMP to UDP. The polypeptide is Uridylate kinase (Bacteroides fragilis (strain ATCC 25285 / DSM 2151 / CCUG 4856 / JCM 11019 / LMG 10263 / NCTC 9343 / Onslow / VPI 2553 / EN-2)).